The chain runs to 264 residues: Small ribosomal subunit protein uS2 (264 aa).

The disordered stretch occupies residues 228 to 264 (QLDAEDDYEDYDGSEYDDDYEETEYTDAVIPDEETEE). The span at 230-264 (DAEDDYEDYDGSEYDDDYEETEYTDAVIPDEETEE) shows a compositional bias: acidic residues.

Belongs to the universal ribosomal protein uS2 family.

The chain is Small ribosomal subunit protein uS2 from Nostoc punctiforme (strain ATCC 29133 / PCC 73102).